The sequence spans 113 residues: CRISPR-associated endoribonuclease Cas2 (113 aa).

Asp33 lines the Mg(2+) pocket.

Belongs to the CRISPR-associated endoribonuclease Cas2 protein family. In terms of assembly, homodimer, forms a heterotetramer with a Cas1 homodimer. It depends on Mg(2+) as a cofactor.

Functionally, CRISPR (clustered regularly interspaced short palindromic repeat), is an adaptive immune system that provides protection against mobile genetic elements (viruses, transposable elements and conjugative plasmids). CRISPR clusters contain sequences complementary to antecedent mobile elements and target invading nucleic acids. CRISPR clusters are transcribed and processed into CRISPR RNA (crRNA). Functions as a ssRNA-specific endoribonuclease. Involved in the integration of spacer DNA into the CRISPR cassette. The type III-A Csm effector complex binds crRNA and acts as a crRNA-guided RNase, DNase and cyclic oligoadenylate synthase; binding of target RNA cognate to the crRNA is required for all activities. The polypeptide is CRISPR-associated endoribonuclease Cas2 (Mycobacterium tuberculosis (strain CDC 1551 / Oshkosh)).